A 257-amino-acid chain; its full sequence is Zinc finger protein 8 (257 aa).

Disordered stretches follow at residues 48–92, 108–128, and 214–238; these read GDNS…NNNN, QALG…KRGS, and GVYS…PNNW. A compositionally biased stretch (polar residues) spans 50-65; the sequence is NSDNLSAEPSDHQTTT. Over residues 66-92 the composition is skewed to basic and acidic residues; the sequence is KNDESSENIKDKDKEKDKDKDKDNNNN. The C2H2-type zinc finger occupies 95–117; the sequence is FECHYCFRNFPTSQALGGHQNAH. Over residues 115–126 the composition is skewed to basic residues; sequence NAHKRERQHAKR.

As to expression, expressed in developing cauline leaves.

The protein resides in the nucleus. Probable transcription factor required for the initiation of inflorescence trichomes in response to gibberellin and cytokinin. Is not involved in the regulation of trichome branching. Is functionally equivalent to GIS2. Acts as a negative regulator of abscisic acid (ABA) signaling during germination and early seedling development. This chain is Zinc finger protein 8, found in Arabidopsis thaliana (Mouse-ear cress).